A 163-amino-acid polypeptide reads, in one-letter code: MRHGKKINHLSRQTGHRKAMLANMACSLIEHKRINTTVAKAKALKQFVEPLITKSKEDTTHNRRIVFAYLRSKYAVTDLFRDVAAKVGDRPGGYTRIIKVGNRLGDNADMAMIELVDFNELYNGGKKEVKKAKSRRGGKAKKAEGTAPEAPAAESESTTEASE.

The tract at residues 127–163 (KEVKKAKSRRGGKAKKAEGTAPEAPAAESESTTEASE) is disordered. Residues 128 to 140 (EVKKAKSRRGGKA) are compositionally biased toward basic residues. Residues 145–163 (GTAPEAPAAESESTTEASE) show a composition bias toward low complexity.

The protein belongs to the bacterial ribosomal protein bL17 family. Part of the 50S ribosomal subunit. Contacts protein L32.

The protein is Large ribosomal subunit protein bL17 of Flavobacterium johnsoniae (strain ATCC 17061 / DSM 2064 / JCM 8514 / BCRC 14874 / CCUG 350202 / NBRC 14942 / NCIMB 11054 / UW101) (Cytophaga johnsonae).